The primary structure comprises 205 residues: Recombination protein RecR (205 aa).

Residues 58 to 75 form a C4-type zinc finger; sequence CSLCQNVTDKEIDPCNIC. Residues 83–182 enclose the Toprim domain; the sequence is RVVCVVEAPN…KVTRIARGIP (100 aa).

Belongs to the RecR family.

Functionally, may play a role in DNA repair. It seems to be involved in an RecBC-independent recombinational process of DNA repair. It may act with RecF and RecO. This Chloroherpeton thalassium (strain ATCC 35110 / GB-78) protein is Recombination protein RecR.